Here is a 730-residue protein sequence, read N- to C-terminus: Elongation factor 2 (730 aa).

Residues 19-260 enclose the tr-type G domain; that stretch reads QRIRNIGIVA…MVIHFLPNPL (242 aa). Residues 28–35, 94–98, and 148–151 each bind GTP; these read AHIDHGKT, DTPGH, and NKVD. Diphthamide is present on His-596.

It belongs to the TRAFAC class translation factor GTPase superfamily. Classic translation factor GTPase family. EF-G/EF-2 subfamily.

The protein resides in the cytoplasm. Functionally, catalyzes the GTP-dependent ribosomal translocation step during translation elongation. During this step, the ribosome changes from the pre-translocational (PRE) to the post-translocational (POST) state as the newly formed A-site-bound peptidyl-tRNA and P-site-bound deacylated tRNA move to the P and E sites, respectively. Catalyzes the coordinated movement of the two tRNA molecules, the mRNA and conformational changes in the ribosome. In Methanosarcina mazei (strain ATCC BAA-159 / DSM 3647 / Goe1 / Go1 / JCM 11833 / OCM 88) (Methanosarcina frisia), this protein is Elongation factor 2.